We begin with the raw amino-acid sequence, 230 residues long: Translation initiation factor IF-3 (230 aa).

Disordered regions lie at residues 1-21 (MAIQ…RTNR) and 184-230 (LQSQ…AAQR). Residues 193–208 (AAAAAAPAAAPAAGAP) show a composition bias toward low complexity. Residues 209 to 220 (APAPAPAAPAPA) show a composition bias toward pro residues. A compositionally biased stretch (low complexity) spans 221 to 230 (PTAADPAAQR).

This sequence belongs to the IF-3 family. As to quaternary structure, monomer.

It is found in the cytoplasm. Functionally, IF-3 binds to the 30S ribosomal subunit and shifts the equilibrium between 70S ribosomes and their 50S and 30S subunits in favor of the free subunits, thus enhancing the availability of 30S subunits on which protein synthesis initiation begins. The chain is Translation initiation factor IF-3 from Anaeromyxobacter dehalogenans (strain 2CP-1 / ATCC BAA-258).